The following is a 486-amino-acid chain: Cytochrome P450 monooxygenase aclC (486 aa).

Residue cysteine 427 coordinates heme.

The protein belongs to the cytochrome P450 family. Requires heme as cofactor.

It participates in mycotoxin biosynthesis. Its function is as follows. Cytochrome P450 monooxygenase; part of the gene cluster that mediates the biosynthesis of aspirochlorine (or antibiotic A30641), an unusual halogenated spiro compound with distinctive antifungal properties due to selective inhibition of protein biosynthesis, and which is also active against bacteria, viruses, and murine tumor cells. The non-ribosomal peptide synthetase (NRPS) aclP is responsible the formation of the diketopiperazine (DKP) core from the condensation of 2 phenylalanine residues. One Phe residue is tailored into chlorotyrosine by hydroxylation and chlorination, whereas the second Phe undergoes an unprecedented C-C bond cleavage to be converted into glycine. After formation of the DKP, sulfur is incorporated into the DKP by conjugation with glutathione by aclG, followed by its stepwise degradation to the thiol by aclI, aclJ and aclK, and the dithiol oxidation by aclT. In addition, oxygenases (aclB, aclC, aclL and aclO) and O-methyltransferases (aclM and aclU) act as tailoring enzymes to produce the intermediate dechloroaspirochlorine. Ultimately, chlorination of dechloroaspirochlorine by the halogenase aclH is the last step in the aspirochlorine pathway. The sequence is that of Cytochrome P450 monooxygenase aclC from Aspergillus oryzae (strain ATCC 42149 / RIB 40) (Yellow koji mold).